The primary structure comprises 213 residues: Adenylate kinase (213 aa).

10–15 (GAGKGT) is a binding site for ATP. The tract at residues 30–59 (STGDMLRAAVAAGSEVGLRAKAAMESGSLV) is NMP. Residues Thr-31, Arg-36, 57 to 59 (SLV), 85 to 88 (GFPR), and Gln-92 each bind AMP. Residues 126 to 163 (GRSSCEKCGEGYHDSFKPSAQPNVCDKCSGTLKRRADD) form an LID region. Arg-127 lines the ATP pocket. 4 residues coordinate Zn(2+): Cys-130, Cys-133, Cys-150, and Cys-153. Positions 160 and 171 each coordinate AMP. Gln-199 provides a ligand contact to ATP.

It belongs to the adenylate kinase family. Monomer.

The protein resides in the cytoplasm. It carries out the reaction AMP + ATP = 2 ADP. The protein operates within purine metabolism; AMP biosynthesis via salvage pathway; AMP from ADP: step 1/1. Its function is as follows. Catalyzes the reversible transfer of the terminal phosphate group between ATP and AMP. Plays an important role in cellular energy homeostasis and in adenine nucleotide metabolism. This is Adenylate kinase from Magnetococcus marinus (strain ATCC BAA-1437 / JCM 17883 / MC-1).